We begin with the raw amino-acid sequence, 116 residues long: MNAVNEMAVPFVFTDNAAGKVKELIEEEGNPGLKLRVFVTGGGCSGFQYGFTFDEEVNEDDTTMEKNGVTLLIDPMSYQYLVGAEIDYTEGLEGSQFVIRNPNATSTCGCGSSFSA.

Cys-44, Cys-108, and Cys-110 together coordinate iron-sulfur cluster.

This sequence belongs to the HesB/IscA family. In terms of assembly, homodimer. Requires iron-sulfur cluster as cofactor.

In terms of biological role, required for insertion of 4Fe-4S clusters. The protein is Putative iron-sulfur cluster insertion protein ErpA of Dechloromonas aromatica (strain RCB).